Here is a 257-residue protein sequence, read N- to C-terminus: Isoprenyl transferase (257 aa).

The active site involves aspartate 33. Mg(2+) is bound at residue aspartate 33. Residues 34 to 37 (GNGR), tryptophan 38, arginine 46, histidine 50, and 78 to 80 (STE) contribute to the substrate site. Asparagine 81 acts as the Proton acceptor in catalysis. Substrate-binding positions include tryptophan 82, arginine 84, arginine 204, and 210–212 (RLS). A Mg(2+)-binding site is contributed by glutamate 223.

This sequence belongs to the UPP synthase family. In terms of assembly, homodimer. Mg(2+) serves as cofactor.

Catalyzes the condensation of isopentenyl diphosphate (IPP) with allylic pyrophosphates generating different type of terpenoids. The sequence is that of Isoprenyl transferase from Clostridium acetobutylicum (strain ATCC 824 / DSM 792 / JCM 1419 / IAM 19013 / LMG 5710 / NBRC 13948 / NRRL B-527 / VKM B-1787 / 2291 / W).